The following is a 455-amino-acid chain: L-serine dehydratase (455 aa).

It belongs to the iron-sulfur dependent L-serine dehydratase family. It depends on [4Fe-4S] cluster as a cofactor.

The catalysed reaction is L-serine = pyruvate + NH4(+). Its pathway is carbohydrate biosynthesis; gluconeogenesis. In Helicobacter pylori (strain ATCC 700392 / 26695) (Campylobacter pylori), this protein is L-serine dehydratase (sdaA).